Here is a 269-residue protein sequence, read N- to C-terminus: Aminoglycoside (3'') (9) adenylyltransferase (269 aa).

The catalysed reaction is streptomycin + ATP = 3''-O-adenylylstreptomycin + diphosphate. It carries out the reaction spectinomycin + ATP = 9-O-adenylylspectinomycin + diphosphate. Functionally, mediates bacterial resistance to the antibiotic spectinomycin and probably also to streptomycin. In Rhizobium radiobacter (Agrobacterium tumefaciens), this protein is Aminoglycoside (3'') (9) adenylyltransferase.